The chain runs to 191 residues: Molybdenum cofactor guanylyltransferase (191 aa).

Residues 13–15 (LAG), K26, D72, and D102 each bind GTP. D102 is a Mg(2+) binding site.

This sequence belongs to the MobA family. As to quaternary structure, monomer. The cofactor is Mg(2+).

The protein localises to the cytoplasm. The catalysed reaction is Mo-molybdopterin + GTP + H(+) = Mo-molybdopterin guanine dinucleotide + diphosphate. Its function is as follows. Transfers a GMP moiety from GTP to Mo-molybdopterin (Mo-MPT) cofactor (Moco or molybdenum cofactor) to form Mo-molybdopterin guanine dinucleotide (Mo-MGD) cofactor. The polypeptide is Molybdenum cofactor guanylyltransferase (Pseudomonas putida (Arthrobacter siderocapsulatus)).